Here is a 70-residue protein sequence, read N- to C-terminus: Large ribosomal subunit protein bL32 (70 aa).

The span at 1 to 19 (MAVPKKKTSPSRRGMRRSH) shows a compositional bias: basic residues. The disordered stretch occupies residues 1–21 (MAVPKKKTSPSRRGMRRSHQA).

It belongs to the bacterial ribosomal protein bL32 family.

This Granulibacter bethesdensis (strain ATCC BAA-1260 / CGDNIH1) protein is Large ribosomal subunit protein bL32.